The following is a 142-amino-acid chain: Large ribosomal subunit protein uL13 (142 aa).

The protein belongs to the universal ribosomal protein uL13 family. Part of the 50S ribosomal subunit.

This protein is one of the early assembly proteins of the 50S ribosomal subunit, although it is not seen to bind rRNA by itself. It is important during the early stages of 50S assembly. This Chromobacterium violaceum (strain ATCC 12472 / DSM 30191 / JCM 1249 / CCUG 213 / NBRC 12614 / NCIMB 9131 / NCTC 9757 / MK) protein is Large ribosomal subunit protein uL13.